The following is a 197-amino-acid chain: Penicillin-binding protein activator LpoB (197 aa).

The N-terminal stretch at 1 to 17 (MIKRMSGIALAALLLSG) is a signal peptide. The N-palmitoyl cysteine moiety is linked to residue Cys-18. Cys-18 carries the S-diacylglycerol cysteine lipid modification. The tract at residues 23 to 57 (PRGETPSQPPAPTTPAKPSVVPTPTPPVVTPVPQP) is disordered. Pro residues predominate over residues 29-57 (SQPPAPTTPAKPSVVPTPTPPVVTPVPQP).

This sequence belongs to the LpoB family. Interacts with PBP1b.

The protein resides in the cell outer membrane. Its function is as follows. Regulator of peptidoglycan synthesis that is essential for the function of penicillin-binding protein 1B (PBP1b). This is Penicillin-binding protein activator LpoB from Edwardsiella piscicida.